A 219-amino-acid chain; its full sequence is tRNA (guanine-N(7)-)-methyltransferase (219 aa).

Residues E43, D68, E101, and N124 each contribute to the S-adenosyl-L-methionine site. Substrate contacts are provided by K128 and D160.

This sequence belongs to the class I-like SAM-binding methyltransferase superfamily. TrmB family.

It catalyses the reaction guanosine(46) in tRNA + S-adenosyl-L-methionine = N(7)-methylguanosine(46) in tRNA + S-adenosyl-L-homocysteine. It participates in tRNA modification; N(7)-methylguanine-tRNA biosynthesis. Catalyzes the formation of N(7)-methylguanine at position 46 (m7G46) in tRNA. This is tRNA (guanine-N(7)-)-methyltransferase from Clostridium beijerinckii (strain ATCC 51743 / NCIMB 8052) (Clostridium acetobutylicum).